We begin with the raw amino-acid sequence, 1181 residues long: WD repeat-containing protein 35 (1181 aa).

5 WD repeats span residues 12–51, 69–108, 113–152, 154–193, and 502–539; these read PNNV…DDSK, GHSG…WYEE, RNKS…IWGK, LKGI…IMKM, and GTRD…LIQK.

As to quaternary structure, component of the IFT complex A (IFT-A) complex. IFT-A complex is divided into a core subcomplex composed of IFT122:IFT140:WDR19 which is associated with TULP3 and a peripheral subcomplex composed of IFT43:WDR35:TTC21B. Interacts directy with IFT122, ITF43 and TTC21B. Interacts with IFT43. Interacts with CFAP61.

The protein resides in the cytoplasm. It localises to the cytoskeleton. The protein localises to the microtubule organizing center. It is found in the centrosome. Its subcellular location is the cilium axoneme. The protein resides in the cilium basal body. Its function is as follows. As a component of the IFT complex A (IFT-A), a complex required for retrograde ciliary transport and entry into cilia of G protein-coupled receptors (GPCRs), it is involved in ciliogenesis and ciliary protein trafficking. May promote CASP3 activation and TNF-stimulated apoptosis. The protein is WD repeat-containing protein 35 of Mus musculus (Mouse).